The sequence spans 330 residues: Beta-ketoacyl-[acyl-carrier-protein] synthase III (330 aa).

Catalysis depends on residues cysteine 114 and histidine 257. The segment at 258–262 is ACP-binding; it reads QANLR. Asparagine 287 is an active-site residue.

It belongs to the thiolase-like superfamily. FabH family. In terms of assembly, homodimer.

The protein resides in the cytoplasm. It carries out the reaction malonyl-[ACP] + acetyl-CoA + H(+) = 3-oxobutanoyl-[ACP] + CO2 + CoA. It participates in lipid metabolism; fatty acid biosynthesis. In terms of biological role, catalyzes the condensation reaction of fatty acid synthesis by the addition to an acyl acceptor of two carbons from malonyl-ACP. Catalyzes the first condensation reaction which initiates fatty acid synthesis and may therefore play a role in governing the total rate of fatty acid production. Possesses both acetoacetyl-ACP synthase and acetyl transacylase activities. Its substrate specificity determines the biosynthesis of branched-chain and/or straight-chain of fatty acids. The protein is Beta-ketoacyl-[acyl-carrier-protein] synthase III of Nitratidesulfovibrio vulgaris (strain ATCC 29579 / DSM 644 / CCUG 34227 / NCIMB 8303 / VKM B-1760 / Hildenborough) (Desulfovibrio vulgaris).